The following is a 756-amino-acid chain: Hyperosmolality-gated Ca2+ permeable channel 1.5 (756 aa).

10 helical membrane passes run 7–27 (IGVAATINILTAFAFFIAFAI), 101–121 (IYLLGLKIFFPIACIAFTVMV), 154–174 (SRFWVHLCMAYVITFWTCFVL), 373–393 (LVIAVAFFFLTFFFMIPIAFV), 425–445 (FLPGIALKIFLIVLPSILMLM), 465–485 (YYMFQFINVFLCSIIAGTALQ), 510–530 (ATFFITYIMVDGWAGVAGEIL), 574–594 (FILGLVYAAVSPILLPFILVF), 628–648 (VVIALIVSQLLLMGLLSTKKA), and 651–671 (STPLLFILPVLTIGFHKFCQG). A disordered region spans residues 731–756 (PDKTPDLVATKRGSRRFNSGSAETFT). The span at 746–756 (RFNSGSAETFT) shows a compositional bias: polar residues.

It belongs to the CSC1 (TC 1.A.17) family.

The protein localises to the membrane. Acts as an osmosensitive calcium-permeable cation channel. The protein is Hyperosmolality-gated Ca2+ permeable channel 1.5 of Arabidopsis thaliana (Mouse-ear cress).